We begin with the raw amino-acid sequence, 199 residues long: Interleukin-11 (199 aa).

A signal peptide spans 1–21 (MNCVCRLVLVVLSLWPDRVVA). The segment at 182–190 (HLTLDWAVR) is important for interaction with IL11RA and for the stimulation of cell proliferation.

Belongs to the IL-6 superfamily. In terms of assembly, interacts with either IL11RA1 or IL11RA2 to associate with IL6ST, giving rise to a multimeric signaling complex.

It is found in the secreted. Its function is as follows. Cytokine that stimulates the proliferation of hematopoietic stem cells and megakaryocyte progenitor cells and induces megakaryocyte maturation resulting in increased platelet production. Also promotes the proliferation of hepatocytes in response to liver damage. Binding to its receptor formed by IL6ST and either IL11RA1 or IL11RA2 activates a signaling cascade that promotes cell proliferation, also in the context of various cancers. Signaling leads to the activation of intracellular protein kinases and the phosphorylation of STAT3. The interaction with the membrane-bound IL11RA and IL6ST stimulates 'classic signaling', whereas the binding of IL11 and soluble IL11RA to IL6ST stimulates 'trans-signaling'. The polypeptide is Interleukin-11 (Mus musculus (Mouse)).